Reading from the N-terminus, the 212-residue chain is Riboflavin kinase (212 aa).

The interval 1–87 (MKKSNLDLLI…HEELSDALYR (87 aa)) is H-T-H motif-like. The tract at residues 88–212 (GIIIGEVVSG…DGDRIRIKTL (125 aa)) is riboflavin kinase. 97-102 (GIGEGA) is a binding site for CDP. Thr-124 and Asn-126 together coordinate Mg(2+). Positions 180 and 188 each coordinate FMN. 193 to 196 (VNLR) is a CDP binding site.

This sequence belongs to the archaeal riboflavin kinase family. Requires Mg(2+) as cofactor.

It catalyses the reaction riboflavin + CTP = CDP + FMN + H(+). The protein operates within cofactor biosynthesis; FMN biosynthesis; FMN from riboflavin (CTP route): step 1/1. In terms of biological role, catalyzes the CTP-dependent phosphorylation of riboflavin (vitamin B2) to form flavin mononucleotide (FMN). This Pyrococcus furiosus (strain ATCC 43587 / DSM 3638 / JCM 8422 / Vc1) protein is Riboflavin kinase (ribK).